A 308-amino-acid chain; its full sequence is Tyrosine recombinase XerC (308 aa).

In terms of domain architecture, Core-binding (CB) spans 20-101 (SKLHTLIDDF…SVKAFSSWAQ (82 aa)). The 181-residue stretch at 122-302 (DLPKILGEQQ…SNKRLLEAFN (181 aa)) folds into the Tyr recombinase domain. Residues Arg-163, Lys-187, His-254, Arg-257, and His-280 contribute to the active site. Tyr-289 (O-(3'-phospho-DNA)-tyrosine intermediate) is an active-site residue.

It belongs to the 'phage' integrase family. XerC subfamily. Forms a cyclic heterotetrameric complex composed of two molecules of XerC and two molecules of XerD.

It localises to the cytoplasm. Functionally, site-specific tyrosine recombinase, which acts by catalyzing the cutting and rejoining of the recombining DNA molecules. The XerC-XerD complex is essential to convert dimers of the bacterial chromosome into monomers to permit their segregation at cell division. It also contributes to the segregational stability of plasmids. The sequence is that of Tyrosine recombinase XerC from Corynebacterium glutamicum (strain ATCC 13032 / DSM 20300 / JCM 1318 / BCRC 11384 / CCUG 27702 / LMG 3730 / NBRC 12168 / NCIMB 10025 / NRRL B-2784 / 534).